We begin with the raw amino-acid sequence, 367 residues long: sn-glycerol-3-phosphate import ATP-binding protein UgpC (367 aa).

Residues 4–235 enclose the ABC transporter domain; that stretch reads LSLRNVQKTY…PASTFVAGFI (232 aa). An ATP-binding site is contributed by 37–44; it reads GPSGCGKS.

This sequence belongs to the ABC transporter superfamily. sn-glycerol-3-phosphate importer (TC 3.A.1.1.3) family. As to quaternary structure, the complex is composed of two ATP-binding proteins (UgpC), two transmembrane proteins (UgpA and UgpE) and a solute-binding protein (UgpB).

The protein resides in the cell inner membrane. The catalysed reaction is sn-glycerol 3-phosphate(out) + ATP + H2O = sn-glycerol 3-phosphate(in) + ADP + phosphate + H(+). In terms of biological role, part of the ABC transporter complex UgpBAEC involved in sn-glycerol-3-phosphate (G3P) import. Responsible for energy coupling to the transport system. This is sn-glycerol-3-phosphate import ATP-binding protein UgpC from Cupriavidus metallidurans (strain ATCC 43123 / DSM 2839 / NBRC 102507 / CH34) (Ralstonia metallidurans).